A 777-amino-acid chain; its full sequence is DISP complex protein LRCH3 (777 aa).

10 LRR repeats span residues 56-79 (AAVTGVLSLSGRKLREFPRGAANH), 81-104 (LTDTTRADLSRNRLSEIPIEACHF), 105-127 (VSLENLNLYQNCIRYIPEAILNL), 128-150 (QALTFLNISRNQLSTLPVHLCNL), 152-172 (LKVLIASNNKLVSLPEEIGHL), 173-195 (RHLMELDVSCNEIQTIPSQIGNL), 196-218 (EALRDLNVRRNHLVHLPEELAEL), 220-239 (LIRLDFSCNKITTIPVCYRN), 240-264 (LRHLQTITLDNNPLQSPPAQICIKG), and 266-290 (VHIFKYLNIQACKIAPDLPDYDRRP). The mediates interaction with DOCK7 stretch occupies residues 56-290 (AAVTGVLSLS…PDLPDYDRRP (235 aa)). Residues S324, S415, and S419 each carry the phosphoserine modification. Residues 382–648 (TAEEEEAEVR…DSTDSITGQN (267 aa)) are mediates direct interaction with MYO6. The segment at 568–590 (FTPLKSDDRPNALLSSPATETVH) is disordered. 2 positions are modified to phosphoserine: S611 and S628. Residues 621–653 (ETNKGHASPLPPSAAPTTDSTDSITGQNSRQRE) are disordered. A compositionally biased stretch (low complexity) spans 635 to 645 (APTTDSTDSIT). In terms of domain architecture, Calponin-homology (CH) spans 652–765 (REEELELIDQ…VTVQALLELA (114 aa)).

Component of the DOCK7-induced septin displacement/DISP complex, at least composed of DOCK7, LRCH3 and MYO6.

The protein localises to the cytoplasm. In terms of biological role, as part of the DISP complex, may regulate the association of septins with actin and thereby regulate the actin cytoskeleton. This chain is DISP complex protein LRCH3, found in Homo sapiens (Human).